A 630-amino-acid polypeptide reads, in one-letter code: Pentatricopeptide repeat-containing protein At1g62670, mitochondrial (630 aa).

A mitochondrion-targeting transit peptide spans 1–22; that stretch reads MRISFAIASTAKRFVHRSLVVR. 16 PPR repeats span residues 44 to 79, 80 to 114, 115 to 149, 150 to 184, 185 to 219, 220 to 254, 255 to 289, 290 to 324, 325 to 359, 360 to 394, 395 to 429, 430 to 464, 465 to 499, 500 to 534, 535 to 569, and 570 to 604; these read TSYDYREKLSRNGLSELKLDDAVALFGEMVKSRPFP, SIIEFSKLLSAIAKMNKFDVVISLGEQMQNLGIPH, NHYTYSILINCFCRRSQLPLALAVLGKMMKLGYEP, NIVTLSSLLNGYCHSKRISEAVALVDQMFVTGYQP, NTVTFNTLIHGLFLHNKASEAMALIDRMVAKGCQP, DLVTYGVVVNGLCKRGDTDLAFNLLNKMEQGKLEP, GVLIYNTIIDGLCKYKHMDDALNLFKEMETKGIRP, NVVTYSSLISCLCNYGRWSDASRLLSDMIERKINP, DVFTFSALIDAFVKEGKLVEAEKLYDEMVKRSIDP, SIVTYSSLINGFCMHDRLDEAKQMFEFMVSKHCFP, DVVTYNTLIKGFCKYKRVEEGMEVFREMSQRGLVG, NTVTYNILIQGLFQAGDCDMAQEIFKEMVSDGVPP, NIMTYNTLLDGLCKNGKLEKAMVVFEYLQRSKMEP, TIYTYNIMIEGMCKAGKVEDGWDLFCNLSLKGVKP, DVVAYNTMISGFCRKGSKEEADALFKEMKEDGTLP, and NSGCYNTLIRARLRDGDREASAELIKEMRSCGFAG.

Belongs to the PPR family. P subfamily.

It is found in the mitochondrion. The chain is Pentatricopeptide repeat-containing protein At1g62670, mitochondrial from Arabidopsis thaliana (Mouse-ear cress).